A 338-amino-acid chain; its full sequence is Heat-inducible transcription repressor HrcA (338 aa).

It belongs to the HrcA family.

Its function is as follows. Negative regulator of class I heat shock genes (grpE-dnaK-dnaJ and groELS operons). Prevents heat-shock induction of these operons. In Bacillus cereus (strain 03BB102), this protein is Heat-inducible transcription repressor HrcA.